Consider the following 119-residue polypeptide: Ribonuclease P protein component (119 aa).

This sequence belongs to the RnpA family. As to quaternary structure, consists of a catalytic RNA component (M1 or rnpB) and a protein subunit.

It catalyses the reaction Endonucleolytic cleavage of RNA, removing 5'-extranucleotides from tRNA precursor.. In terms of biological role, RNaseP catalyzes the removal of the 5'-leader sequence from pre-tRNA to produce the mature 5'-terminus. It can also cleave other RNA substrates such as 4.5S RNA. The protein component plays an auxiliary but essential role in vivo by binding to the 5'-leader sequence and broadening the substrate specificity of the ribozyme. The protein is Ribonuclease P protein component of Aeromonas hydrophila subsp. hydrophila (strain ATCC 7966 / DSM 30187 / BCRC 13018 / CCUG 14551 / JCM 1027 / KCTC 2358 / NCIMB 9240 / NCTC 8049).